Reading from the N-terminus, the 507-residue chain is ATP synthase subunit alpha, chloroplastic (507 aa).

170 to 177 (GDRQTGKT) contacts ATP.

It belongs to the ATPase alpha/beta chains family. F-type ATPases have 2 components, CF(1) - the catalytic core - and CF(0) - the membrane proton channel. CF(1) has five subunits: alpha(3), beta(3), gamma(1), delta(1), epsilon(1). CF(0) has four main subunits: a, b, b' and c.

The protein resides in the plastid. Its subcellular location is the chloroplast thylakoid membrane. The catalysed reaction is ATP + H2O + 4 H(+)(in) = ADP + phosphate + 5 H(+)(out). In terms of biological role, produces ATP from ADP in the presence of a proton gradient across the membrane. The alpha chain is a regulatory subunit. This Anthoceros angustus (Hornwort) protein is ATP synthase subunit alpha, chloroplastic.